We begin with the raw amino-acid sequence, 224 residues long: Cytidylate kinase (224 aa).

Residue 9–17 (GPSGSGKGT) coordinates ATP.

The protein belongs to the cytidylate kinase family. Type 1 subfamily.

The protein localises to the cytoplasm. The catalysed reaction is CMP + ATP = CDP + ADP. It catalyses the reaction dCMP + ATP = dCDP + ADP. In Saccharophagus degradans (strain 2-40 / ATCC 43961 / DSM 17024), this protein is Cytidylate kinase.